Consider the following 532-residue polypeptide: Chaperonin GroEL 2 (532 aa).

ATP contacts are provided by residues 30 to 33 (TLGP), lysine 51, 87 to 91 (DGTTT), glycine 415, 479 to 481 (NAA), and aspartate 495.

This sequence belongs to the chaperonin (HSP60) family. In terms of assembly, forms a cylinder of 14 subunits composed of two heptameric rings stacked back-to-back. Interacts with the co-chaperonin GroES.

It is found in the cytoplasm. The catalysed reaction is ATP + H2O + a folded polypeptide = ADP + phosphate + an unfolded polypeptide.. In terms of biological role, together with its co-chaperonin GroES, plays an essential role in assisting protein folding. The GroEL-GroES system forms a nano-cage that allows encapsulation of the non-native substrate proteins and provides a physical environment optimized to promote and accelerate protein folding. The protein is Chaperonin GroEL 2 of Vibrio parahaemolyticus serotype O3:K6 (strain RIMD 2210633).